The sequence spans 502 residues: Bifunctional purine biosynthesis protein PurH (502 aa).

One can recognise an MGS-like domain in the interval M1 to S144.

Belongs to the PurH family.

The enzyme catalyses (6R)-10-formyltetrahydrofolate + 5-amino-1-(5-phospho-beta-D-ribosyl)imidazole-4-carboxamide = 5-formamido-1-(5-phospho-D-ribosyl)imidazole-4-carboxamide + (6S)-5,6,7,8-tetrahydrofolate. It catalyses the reaction IMP + H2O = 5-formamido-1-(5-phospho-D-ribosyl)imidazole-4-carboxamide. Its pathway is purine metabolism; IMP biosynthesis via de novo pathway; 5-formamido-1-(5-phospho-D-ribosyl)imidazole-4-carboxamide from 5-amino-1-(5-phospho-D-ribosyl)imidazole-4-carboxamide (10-formyl THF route): step 1/1. The protein operates within purine metabolism; IMP biosynthesis via de novo pathway; IMP from 5-formamido-1-(5-phospho-D-ribosyl)imidazole-4-carboxamide: step 1/1. This Clostridium beijerinckii (strain ATCC 51743 / NCIMB 8052) (Clostridium acetobutylicum) protein is Bifunctional purine biosynthesis protein PurH.